The chain runs to 316 residues: Probable cell division protein WhiA (316 aa).

Positions 275-309 (TLKELGEMVSGGKISKSGINHRLRKIDEIAEKLRA) form a DNA-binding region, H-T-H motif.

This sequence belongs to the WhiA family.

In terms of biological role, involved in cell division and chromosome segregation. The polypeptide is Probable cell division protein WhiA (Bacillus cereus (strain B4264)).